Reading from the N-terminus, the 430-residue chain is Gamma-glutamyl phosphate reductase (430 aa).

It belongs to the gamma-glutamyl phosphate reductase family.

The protein localises to the cytoplasm. The enzyme catalyses L-glutamate 5-semialdehyde + phosphate + NADP(+) = L-glutamyl 5-phosphate + NADPH + H(+). The protein operates within amino-acid biosynthesis; L-proline biosynthesis; L-glutamate 5-semialdehyde from L-glutamate: step 2/2. In terms of biological role, catalyzes the NADPH-dependent reduction of L-glutamate 5-phosphate into L-glutamate 5-semialdehyde and phosphate. The product spontaneously undergoes cyclization to form 1-pyrroline-5-carboxylate. The polypeptide is Gamma-glutamyl phosphate reductase (Rhodopseudomonas palustris (strain ATCC BAA-98 / CGA009)).